The primary structure comprises 319 residues: MSLNFLDFEQPIAELEAKIDSLTAVSRQDEKLDINIDEEVHRLREKSVELTRKIFADLGAWQVAQLARHPQRPYTLDYVRLAFDEFDELAGDRAYADDKAIVGGIARLEGRPVMIIGHQKGRETKEKIRRNFGMPAPEGYRKALRLMEMAERFNMPIITFIDTPGAYPGVGAEERGQSEAIARNLREMSRLNVPVICTVIGEGGSGGALAIGVGDKVNMLQYSTYSVISPEGCASILWKSANKAPLAAEAMGIIAPRLKELKLIDSIIPEPLGGAHRNPEAMAASLKAQLLEDLADLDVLSTDDLKNRRYQRLMSYGYA.

The region spanning Asn35–Asp296 is the CoA carboxyltransferase C-terminal domain.

Belongs to the AccA family. As to quaternary structure, acetyl-CoA carboxylase is a heterohexamer composed of biotin carboxyl carrier protein (AccB), biotin carboxylase (AccC) and two subunits each of ACCase subunit alpha (AccA) and ACCase subunit beta (AccD).

The protein localises to the cytoplasm. It carries out the reaction N(6)-carboxybiotinyl-L-lysyl-[protein] + acetyl-CoA = N(6)-biotinyl-L-lysyl-[protein] + malonyl-CoA. The protein operates within lipid metabolism; malonyl-CoA biosynthesis; malonyl-CoA from acetyl-CoA: step 1/1. Functionally, component of the acetyl coenzyme A carboxylase (ACC) complex. First, biotin carboxylase catalyzes the carboxylation of biotin on its carrier protein (BCCP) and then the CO(2) group is transferred by the carboxyltransferase to acetyl-CoA to form malonyl-CoA. This is Acetyl-coenzyme A carboxylase carboxyl transferase subunit alpha from Salmonella dublin (strain CT_02021853).